Here is a 138-residue protein sequence, read N- to C-terminus: Thioredoxin H2-1 (138 aa).

The segment at 1–20 (MGGAFSTSKPKPAAGEEGGE) is disordered. One can recognise a Thioredoxin domain in the interval 12 to 129 (PAAGEEGGES…LEKTINTLRS (118 aa)). Catalysis depends on nucleophile residues C55 and C58. A disulfide bond links C55 and C58.

This sequence belongs to the thioredoxin family. Plant H-type subfamily.

It is found in the cytoplasm. In terms of biological role, probable thiol-disulfide oxidoreductase that may be involved in the redox regulation of a number of cytosolic enzymes. The polypeptide is Thioredoxin H2-1 (Oryza sativa subsp. japonica (Rice)).